The primary structure comprises 190 residues: Dynactin subunit 6 (190 aa).

Phosphothreonine is present on Thr-186.

It belongs to the dynactin subunits 5/6 family. Dynactin subunit 6 subfamily. In terms of assembly, subunit of dynactin, a multiprotein complex part of a tripartite complex with dynein and a adapter, such as BICDL1, BICD2 or HOOK3. The dynactin complex is built around ACTR1A/ACTB filament and consists of an actin-related filament composed of a shoulder domain, a pointed end and a barbed end. Its length is defined by its flexible shoulder domain. The soulder is composed of 2 DCTN1 subunits, 4 DCTN2 and 2 DCTN3. The 4 DCNT2 (via N-terminus) bind the ACTR1A filament and act as molecular rulers to determine the length. The pointed end is important for binding dynein-dynactin cargo adapters. Consists of 4 subunits: ACTR10, DCNT4, DCTN5 and DCTN6. Within the complex DCTN6 forms a heterodimer with DCTN5. The barbed end is composed of a CAPZA1:CAPZB heterodimers, which binds ACTR1A/ACTB filament and dynactin and stabilizes dynactin. Interacts with PLK1. Interacts with N4BP2L1. In terms of processing, phosphorylation at Thr-186 by CDK1 during mitotic prometaphase creates a binding site for PLK1 that facilitates its recruitment to kinetochores.

It localises to the cytoplasm. Its subcellular location is the cytoskeleton. The protein localises to the chromosome. It is found in the centromere. The protein resides in the kinetochore. Part of the dynactin complex that activates the molecular motor dynein for ultra-processive transport along microtubules. This is Dynactin subunit 6 (DCTN6) from Sus scrofa (Pig).